We begin with the raw amino-acid sequence, 607 residues long: CUB and zona pellucida-like domain-containing protein 1 (607 aa).

Residues 1-19 (MEVTGRLFIWAILAVSCRA) form the signal peptide. Residues 20 to 568 (QLNSTAAEGR…AEISKQPLSH (549 aa)) are Lumenal-facing. An N-linked (GlcNAc...) asparagine glycan is attached at Asn22. An intrachain disulfide couples Cys32 to Cys58. 2 CUB domains span residues 32 to 146 (CTAS…YFFS) and 154 to 265 (CGGY…YAST). N-linked (GlcNAc...) asparagine glycosylation occurs at Asn67. Cystine bridges form between Cys85–Cys107 and Cys154–Cys180. Residue Asn195 is glycosylated (N-linked (GlcNAc...) asparagine). The cysteines at positions 207 and 229 are disulfide-linked. A ZP domain is found at 276–519 (SCASDKMRVI…SRCNQGCVSR (244 aa)). A glycan (N-linked (GlcNAc...) asparagine) is linked at Asn419. Cys442 and Cys498 are oxidised to a cystine. Residues 569-589 (LHLFSFMVLALNVVIVVTATV) form a helical membrane-spanning segment. Topologically, residues 590-607 (RHFLNRWKDHGYQKLQVY) are cytoplasmic.

Expressed predominantly in epithelium of uterus and oviduct.

It is found in the zymogen granule membrane. Functionally, localized to zymogen granules, where it functions in trypsinogen activation. May indirectly regulate cell motility, cell-cell and cell/extracellular matrix interactions. The sequence is that of CUB and zona pellucida-like domain-containing protein 1 from Rattus norvegicus (Rat).